Consider the following 70-residue polypeptide: uncharacterized protein (70 aa).

The HTH cro/C1-type domain occupies 5–59; sequence IREFRAKYGMTQEELAKKVGVRRETIVFLEKGKYNPSLRLAYKIARVFNARIEDL. Residues 16–35 constitute a DNA-binding region (H-T-H motif); that stretch reads QEELAKKVGVRRETIVFLEK.

This is an uncharacterized protein from Archaeoglobus fulgidus (strain ATCC 49558 / DSM 4304 / JCM 9628 / NBRC 100126 / VC-16).